Reading from the N-terminus, the 391-residue chain is Pyruvate dehydrogenase E1 component subunit beta-3, chloroplastic (391 aa).

The transit peptide at 1 to 35 directs the protein to the chloroplast; it reads MATAAAASLQYALHGAASASAKPRSAAPGRSVRVV. Glu127 serves as a coordination point for thiamine diphosphate. K(+) is bound by residues Ile180, Ala228, Ile229, and Asn233.

As to quaternary structure, tetramer of 2 alpha and 2 beta subunits. The cofactor is thiamine diphosphate.

The protein resides in the plastid. The protein localises to the chloroplast. It carries out the reaction N(6)-[(R)-lipoyl]-L-lysyl-[protein] + pyruvate + H(+) = N(6)-[(R)-S(8)-acetyldihydrolipoyl]-L-lysyl-[protein] + CO2. The pyruvate dehydrogenase complex catalyzes the overall conversion of pyruvate to acetyl-CoA and CO(2). It contains multiple copies of three enzymatic components: pyruvate dehydrogenase (E1), dihydrolipoamide acetyltransferase (E2) and lipoamide dehydrogenase (E3). The polypeptide is Pyruvate dehydrogenase E1 component subunit beta-3, chloroplastic (Oryza sativa subsp. japonica (Rice)).